We begin with the raw amino-acid sequence, 431 residues long: Polygalacturonase ADPG1 (431 aa).

The signal sequence occupies residues Met1–Ala23. PbH1 repeat units lie at residues Cys223–Asn249 and Thr250–Asp271. The active-site Proton donor is Asp264. The active site involves His287. PbH1 repeat units lie at residues Val303–Thr324, Ala332–Gln353, and Cys398–Val420.

The protein belongs to the glycosyl hydrolase 28 family. As to expression, expressed in flower buds and siliques, in the dehiscence zone of anthers (stomium cells) and maturing siliques. Expressed in stigma during pollen tube growth. Not expressed in seeds or in the floral part or leaf abscission zone but found at the junction between the seed and the funiculus at the site of seed abscission.

The protein localises to the secreted. Its subcellular location is the cell wall. It is found in the cytoplasm. It carries out the reaction (1,4-alpha-D-galacturonosyl)n+m + H2O = (1,4-alpha-D-galacturonosyl)n + (1,4-alpha-D-galacturonosyl)m.. Its function is as follows. Polygalacturonase involved in cell separation in the final stages of pod shatter and in anther dehiscence. Not involved in floral organ abscission. This is Polygalacturonase ADPG1 (ADPG1) from Arabidopsis thaliana (Mouse-ear cress).